We begin with the raw amino-acid sequence, 183 residues long: Ribosome-recycling factor (183 aa).

Belongs to the RRF family.

The protein localises to the cytoplasm. Its function is as follows. Responsible for the release of ribosomes from messenger RNA at the termination of protein biosynthesis. May increase the efficiency of translation by recycling ribosomes from one round of translation to another. In Deinococcus radiodurans (strain ATCC 13939 / DSM 20539 / JCM 16871 / CCUG 27074 / LMG 4051 / NBRC 15346 / NCIMB 9279 / VKM B-1422 / R1), this protein is Ribosome-recycling factor.